Consider the following 237-residue polypeptide: Uridylate kinase (237 aa).

Residue 9–12 (KLSG) participates in ATP binding. Gly-51 contributes to the UMP binding site. ATP contacts are provided by Gly-52 and Arg-56. UMP-binding positions include Asp-71 and 132–139 (CGNPFFTT). Positions 159, 165, and 168 each coordinate ATP.

Belongs to the UMP kinase family. In terms of assembly, homohexamer.

The protein resides in the cytoplasm. The enzyme catalyses UMP + ATP = UDP + ADP. The protein operates within pyrimidine metabolism; CTP biosynthesis via de novo pathway; UDP from UMP (UMPK route): step 1/1. With respect to regulation, inhibited by UTP. Its function is as follows. Catalyzes the reversible phosphorylation of UMP to UDP. The chain is Uridylate kinase from Prochlorococcus marinus (strain SARG / CCMP1375 / SS120).